The chain runs to 475 residues: Mitochondrial adenyl nucleotide antiporter SLC25A24 (475 aa).

The segment at 1–173 (MLRWLRAFVL…RFWKHSTGID (173 aa)) is regulatory N-terminal domain. The Mitochondrial intermembrane segment spans residues 1-197 (MLRWLRAFVL…EKKSGQWWRQ (197 aa)). EF-hand domains follow at residues 19–54 (EPPT…LGIP), 55–88 (LGQD…KDHE), 86–121 (DHEK…LGLH), and 122–157 (ISEK…NPVT). 20 residues coordinate Ca(2+): Asp-32, Asn-34, Asp-36, Val-38, Glu-43, Asp-68, Asn-70, Asp-72, Lys-74, Glu-79, Asp-99, Asn-101, Asp-103, Lys-105, Glu-110, Asp-135, Asp-137, Thr-139, Thr-141, and Glu-146. A linker region region spans residues 159 to 168 (IEEIIRFWKH). The interval 174–475 (IGDSLTIPDE…MKQTLGVAQK (302 aa)) is C-terminal transmembrane transporter domain. Solcar repeat units follow at residues 192–276 (GQWW…YKKL), 284–369 (LGTF…LKSY), and 381–469 (PGVM…MKQT). A helical membrane pass occupies residues 198-215 (LLAGGVAGAVSRTSTAPL). Residues 216–250 (DRLKVMMQVHGSKSMNIFGGFRQMVKEGGIRSLWR) lie on the Mitochondrial matrix side of the membrane. A helical membrane pass occupies residues 251–270 (GNGTNVIKIAPETAVKFWAY). Topologically, residues 271–293 (EQYKKLLTEEGQKLGTFERFISG) are mitochondrial intermembrane. The chain crosses the membrane as a helical span at residues 294-307 (SMAGATAQTFIYPM). Residues 308–343 (EVLKTRLAVAKTGQYSGIYGCAKKILKHEGFGAFYK) lie on the Mitochondrial matrix side of the membrane. Lys-318 is modified (N6-acetyllysine; alternate). At Lys-318 the chain carries N6-succinyllysine; alternate. Residue Lys-334 is modified to N6-acetyllysine. Residues 344–363 (GYIPNLLGIIPYAGIDLAVY) form a helical membrane-spanning segment. Topologically, residues 364-386 (ELLKSYWLDNFAKDSVNPGVMVL) are mitochondrial intermembrane. The chain crosses the membrane as a helical span at residues 387 to 404 (LSCGALSSTCGQLASYPL). Topologically, residues 405 to 443 (ALVRTRMQAQATVEGAPQLSMVGLFQRIVSKEGVSGLYR) are mitochondrial matrix. Residue Lys-435 is modified to N6-acetyllysine; alternate. The residue at position 435 (Lys-435) is an N6-succinyllysine; alternate. A helical transmembrane segment spans residues 444–463 (GITPNFMKVLPAVGISYVVY). At 464–475 (ENMKQTLGVAQK) the chain is on the mitochondrial intermembrane side.

This sequence belongs to the mitochondrial carrier (TC 2.A.29) family. As to quaternary structure, monomer.

It is found in the mitochondrion inner membrane. It catalyses the reaction Mg(2+)(out) + phosphate(in) + ATP(out) = Mg(2+)(in) + phosphate(out) + ATP(in). The enzyme catalyses ADP(out) + phosphate(in) + H(+)(out) = ADP(in) + phosphate(out) + H(+)(in). It carries out the reaction AMP(out) + phosphate(in) = AMP(in) + phosphate(out). The catalysed reaction is phosphate(in) + ATP(out) + 2 H(+)(out) = phosphate(out) + ATP(in) + 2 H(+)(in). It catalyses the reaction dADP(in) + ADP(out) = dADP(out) + ADP(in). The enzyme catalyses Mg(2+)(in) + ADP(out) + ATP(in) + H(+)(out) = Mg(2+)(out) + ADP(in) + ATP(out) + H(+)(in). It carries out the reaction ADP(out) + diphosphate(in) = ADP(in) + diphosphate(out). The catalysed reaction is dAMP(in) + ADP(out) + H(+)(out) = dAMP(out) + ADP(in) + H(+)(in). It catalyses the reaction 3'-AMP(in) + ADP(out) + H(+)(out) = 3'-AMP(out) + ADP(in) + H(+)(in). The enzyme catalyses dAMP(out) + phosphate(in) = dAMP(in) + phosphate(out). It carries out the reaction 3'-AMP(out) + phosphate(in) = 3'-AMP(in) + phosphate(out). The catalysed reaction is dADP(out) + phosphate(in) + H(+)(out) = dADP(in) + phosphate(out) + H(+)(in). Its activity is regulated as follows. Activated by an increase in cytosolic calcium levels that induce a conformational change of the N-terminal regulatory domain, uncapping the channel and allowing transport. Inhibited by bathophenanthroline, mersalyl, p-hydroxymercuribenzoate, bromcresol purple and tannic acid. In terms of biological role, electroneutral antiporter that mediates the transport of adenyl nucleotides through the inner mitochondrial membrane. Originally identified as an ATP-magnesium/inorganic phosphate antiporter, it also acts as a broad specificity adenyl nucleotide antiporter. By regulating the mitochondrial matrix adenyl nucleotide pool could adapt to changing cellular energetic demands and indirectly regulate adenyl nucleotide-dependent metabolic pathways. In vitro, a low activity is also observed with guanyl and pyrimidine nucleotides. May play a role in protecting cells against oxidative stress-induced cell death, by buffering calcium levels in the mitochondrial matrix through the formation of calcium-phosphate precipitates. This chain is Mitochondrial adenyl nucleotide antiporter SLC25A24, found in Mus musculus (Mouse).